The following is a 293-amino-acid chain: Undecaprenyl-diphosphatase (293 aa).

Transmembrane regions (helical) follow at residues 3–23, 43–63, 85–105, 109–129, 203–223, 238–258, and 269–289; these read IALA…EFLP, KGKI…CWEF, LNVI…GKAI, LFNP…ILWA, VATE…TVYE, IFGI…RWLL, and FAWY…THLI.

The protein belongs to the UppP family.

It is found in the cell inner membrane. It carries out the reaction di-trans,octa-cis-undecaprenyl diphosphate + H2O = di-trans,octa-cis-undecaprenyl phosphate + phosphate + H(+). In terms of biological role, catalyzes the dephosphorylation of undecaprenyl diphosphate (UPP). Confers resistance to bacitracin. This Ralstonia nicotianae (strain ATCC BAA-1114 / GMI1000) (Ralstonia solanacearum) protein is Undecaprenyl-diphosphatase.